Consider the following 351-residue polypeptide: Nicotinate-nucleotide--dimethylbenzimidazole phosphoribosyltransferase (351 aa).

Glu317 (proton acceptor) is an active-site residue.

It belongs to the CobT family.

The enzyme catalyses 5,6-dimethylbenzimidazole + nicotinate beta-D-ribonucleotide = alpha-ribazole 5'-phosphate + nicotinate + H(+). It functions in the pathway nucleoside biosynthesis; alpha-ribazole biosynthesis; alpha-ribazole from 5,6-dimethylbenzimidazole: step 1/2. Its function is as follows. Catalyzes the synthesis of alpha-ribazole-5'-phosphate from nicotinate mononucleotide (NAMN) and 5,6-dimethylbenzimidazole (DMB). In Pseudomonas putida (strain W619), this protein is Nicotinate-nucleotide--dimethylbenzimidazole phosphoribosyltransferase.